The primary structure comprises 186 residues: Adrenodoxin, mitochondrial (186 aa).

A mitochondrion-targeting transit peptide spans 1-58; the sequence is MAVRLLRVASAALGDTAVRWQPLVGPRAGNRGPGGSIWLGLGGRAAAARTLSLSARAW. S61 carries the phosphoserine modification. K64 carries the N6-acetyllysine; alternate modification. K64 is modified (N6-succinyllysine; alternate). The region spanning 65–169 is the 2Fe-2S ferredoxin-type domain; the sequence is ITVHFINRDG…NMTVRVPEAV (105 aa). The [2Fe-2S] cluster site is built by C104, C110, C113, and C150. At K156 the chain carries N6-succinyllysine. S175 is modified (phosphoserine).

Belongs to the adrenodoxin/putidaredoxin family. In terms of assembly, interacts with CYP11A1. The cofactor is [2Fe-2S] cluster.

The protein resides in the mitochondrion matrix. Its function is as follows. Essential for the synthesis of various steroid hormones. Participates in the reduction of mitochondrial cytochrome P450 for steroidogenesis. Transfers electrons from adrenodoxin reductase to CYP11A1, a cytochrome P450 that catalyzes cholesterol side-chain cleavage. Does not form a ternary complex with adrenodoxin reductase and CYP11A1 but shuttles between the two enzymes to transfer electrons. The polypeptide is Adrenodoxin, mitochondrial (FDX1) (Sus scrofa (Pig)).